The following is a 423-amino-acid chain: Imidazolonepropionase (423 aa).

Fe(3+) is bound by residues His78 and His80. The Zn(2+) site is built by His78 and His80. 3 residues coordinate 4-imidazolone-5-propanoate: Arg87, Tyr150, and His183. Tyr150 is a binding site for N-formimidoyl-L-glutamate. His247 contributes to the Fe(3+) binding site. Residue His247 coordinates Zn(2+). Glu250 is a binding site for 4-imidazolone-5-propanoate. Fe(3+) is bound at residue Asp322. Asp322 provides a ligand contact to Zn(2+). Residues Asn324 and Gly326 each contribute to the N-formimidoyl-L-glutamate site. A 4-imidazolone-5-propanoate-binding site is contributed by Ser327.

This sequence belongs to the metallo-dependent hydrolases superfamily. HutI family. Zn(2+) serves as cofactor. Requires Fe(3+) as cofactor.

Its subcellular location is the cytoplasm. The catalysed reaction is 4-imidazolone-5-propanoate + H2O = N-formimidoyl-L-glutamate. It functions in the pathway amino-acid degradation; L-histidine degradation into L-glutamate; N-formimidoyl-L-glutamate from L-histidine: step 3/3. In terms of biological role, catalyzes the hydrolytic cleavage of the carbon-nitrogen bond in imidazolone-5-propanoate to yield N-formimidoyl-L-glutamate. It is the third step in the universal histidine degradation pathway. In Bacillus cereus (strain ZK / E33L), this protein is Imidazolonepropionase.